The primary structure comprises 31 residues: MFTITSYFGFLLAALTITSAIFIGLNKIRLI.

Residues 4 to 24 (ITSYFGFLLAALTITSAIFIG) form a helical membrane-spanning segment.

Belongs to the PetL family. As to quaternary structure, the 4 large subunits of the cytochrome b6-f complex are cytochrome b6, subunit IV (17 kDa polypeptide, PetD), cytochrome f and the Rieske protein, while the 4 small subunits are PetG, PetL, PetM and PetN. The complex functions as a dimer.

The protein resides in the plastid. It localises to the chloroplast thylakoid membrane. Component of the cytochrome b6-f complex, which mediates electron transfer between photosystem II (PSII) and photosystem I (PSI), cyclic electron flow around PSI, and state transitions. PetL is important for photoautotrophic growth as well as for electron transfer efficiency and stability of the cytochrome b6-f complex. In Ficus carica (Common fig), this protein is Cytochrome b6-f complex subunit 6.